We begin with the raw amino-acid sequence, 483 residues long: Putative inorganic phosphate cotransporter (483 aa).

The next 7 membrane-spanning stretches (helical) occupy residues 64–84, 90–110, 187–207, 292–312, 349–369, 383–403, and 420–440; these read YILSSFFYGYVITQIPFGILA, LRFLGYGMLINSVFAFLVPVA, IFYVFGIVGTVWSIAFLIFVY, LPYLAMWLLSMFISVIADWMI, ALTLAILTIGVGLNGGIYSGF, FLMSITNCSANLAGLLAPIAA, and IVFFIAAFVYIICGTFYNIFG. Positions 447-483 are disordered; that stretch reads WDNPSEDEQKPALESSSTTNPPRLSNGSSAPRAISSS. A compositionally biased stretch (polar residues) spans 460–483; it reads ESSSTTNPPRLSNGSSAPRAISSS.

Belongs to the major facilitator superfamily. Sodium/anion cotransporter family.

It localises to the membrane. In terms of biological role, may be an inorganic phosphate cotransporter. This is Putative inorganic phosphate cotransporter (Picot) from Drosophila ananassae (Fruit fly).